The sequence spans 494 residues: MAGSNLLIHLDTIDQNDLIYVERDMNFAQKVGLCFLLYGDDHSDATYILQKLLAMTRSDFPQSDLLIKFAKSRPETWRRHLVEALCIIGARKVLRRLGFCWQELRMHYLPHIAGITLHVHPLLKSLYRMCEELSLVQSGRLLLDVREKVESQQAGDPLRFYDPAYLEIFLLDWLTRRSIKLGDINAAGSDVQLLVGHLKSNGLQAQANLLKDTIISNAPEPDAAGTAAMAVKQEIESDNQQSYCSTQIDALKLTRENAGIALIINQQKFHRNVSRDNMKFLSPDPLRRRDGTDVDKERLIEVFSSMGYNVEAYDNVDHMGIIERIRSACDRSLVRDSLVVFILSHGFEEAVYASNSIAMKITDIEDLLCSYDTLYYKPKLLIIQACQEKLVHKKKPNELFRIDVTTVSPDQHIDMLRAMSTVNGYAALRHTQTGSWFIGSLCDAIDRRSASEHIADILTIVTNEVSKKRGSNDESMVPNVKSTFRQHVYFPPRL.

A propeptide spanning residues 1-242 (MAGSNLLIHL…QEIESDNQQS (242 aa)) is cleaved from the precursor. Active-site residues include His-345 and Cys-386. Residues 401 to 410 (RIDVTTVSPD) constitute a propeptide that is removed on maturation.

Belongs to the peptidase C14A family. As to quaternary structure, heterotetramer that consists of two anti-parallel arranged heterodimers, each one formed by a 15 kDa (caspase-8 subunit p15) and a 10 kDa (caspase-8 subunit p10) subunit. Interacts (via N-terminus) with Diap2; likely to bind Diap2 simultaneously with Fadd to form a trimeric complex. Interacts with Dark (via N-terminus). Post-translationally, polyubiquitinated by Diap2 following activation of the immune deficiency (Imd) pathway. Constitutively expressed in fat bodies of larvae and adults.

The protein localises to the cytoplasm. The enzyme catalyses Strict requirement for Asp at position P1 and has a preferred cleavage sequence of (Leu/Asp/Val)-Glu-Thr-Asp-|-(Gly/Ser/Ala).. In terms of biological role, effector of the programmed cell death (PCD) activators rpr, grim and hid. May play an apoptotic role in the germline as well as soma. Fadd interacts with Dredd to promote cleavage of Dredd and is necessary and sufficient for enhancing Dredd-induced apoptosis. Plays a role in the innate immune response. Required for resistance to Gram-negative bacterial infection. Diap2-mediated ubiquitination of Dredd is critical for processing of imd and rel and the subsequent expression of antimicrobial genes such as DptA. The protein is Caspase-8 of Drosophila melanogaster (Fruit fly).